We begin with the raw amino-acid sequence, 356 residues long: Protein-glutamate methylesterase/protein-glutamine glutaminase 2 (356 aa).

The Response regulatory domain maps to 4–121 (RALVVDDSAL…SQSMPEMAEE (118 aa)). At D55 the chain carries 4-aspartylphosphate. Positions 161 to 356 (KAAPRNILAI…MAEEIIRIIG (196 aa)) constitute a CheB-type methylesterase domain. Active-site residues include S173, H200, and D300.

This sequence belongs to the CheB family. In terms of processing, phosphorylated by CheA. Phosphorylation of the N-terminal regulatory domain activates the methylesterase activity.

It localises to the cytoplasm. The catalysed reaction is [protein]-L-glutamate 5-O-methyl ester + H2O = L-glutamyl-[protein] + methanol + H(+). It catalyses the reaction L-glutaminyl-[protein] + H2O = L-glutamyl-[protein] + NH4(+). Its function is as follows. Involved in chemotaxis. Part of a chemotaxis signal transduction system that modulates chemotaxis in response to various stimuli. Catalyzes the demethylation of specific methylglutamate residues introduced into the chemoreceptors (methyl-accepting chemotaxis proteins or MCP) by CheR. Also mediates the irreversible deamidation of specific glutamine residues to glutamic acid. In Methanosarcina acetivorans (strain ATCC 35395 / DSM 2834 / JCM 12185 / C2A), this protein is Protein-glutamate methylesterase/protein-glutamine glutaminase 2.